Consider the following 225-residue polypeptide: Imidazoleglycerol-phosphate dehydratase (225 aa).

The protein belongs to the imidazoleglycerol-phosphate dehydratase family.

The catalysed reaction is D-erythro-1-(imidazol-4-yl)glycerol 3-phosphate = 3-(imidazol-4-yl)-2-oxopropyl phosphate + H2O. Its pathway is amino-acid biosynthesis; L-histidine biosynthesis; L-histidine from 5-phospho-alpha-D-ribose 1-diphosphate: step 6/9. In Pyricularia oryzae (strain 70-15 / ATCC MYA-4617 / FGSC 8958) (Rice blast fungus), this protein is Imidazoleglycerol-phosphate dehydratase (PTH3).